The sequence spans 176 residues: NAD(P)H-quinone oxidoreductase subunit 6, chloroplastic (176 aa).

A run of 5 helical transmembrane segments spans residues Phe-10–Pro-30, Pro-32–Leu-52, Ala-61–Met-81, Leu-92–Ile-112, and Phe-152–Thr-172.

The protein belongs to the complex I subunit 6 family. In terms of assembly, NDH is composed of at least 16 different subunits, 5 of which are encoded in the nucleus.

The protein resides in the plastid. It localises to the chloroplast thylakoid membrane. It catalyses the reaction a plastoquinone + NADH + (n+1) H(+)(in) = a plastoquinol + NAD(+) + n H(+)(out). It carries out the reaction a plastoquinone + NADPH + (n+1) H(+)(in) = a plastoquinol + NADP(+) + n H(+)(out). Functionally, NDH shuttles electrons from NAD(P)H:plastoquinone, via FMN and iron-sulfur (Fe-S) centers, to quinones in the photosynthetic chain and possibly in a chloroplast respiratory chain. The immediate electron acceptor for the enzyme in this species is believed to be plastoquinone. Couples the redox reaction to proton translocation, and thus conserves the redox energy in a proton gradient. The protein is NAD(P)H-quinone oxidoreductase subunit 6, chloroplastic (ndhG) of Daucus carota (Wild carrot).